Reading from the N-terminus, the 283-residue chain is MEMO1 family protein DKAM_1357 (283 aa).

Belongs to the MEMO1 family.

This chain is MEMO1 family protein DKAM_1357, found in Desulfurococcus amylolyticus (strain DSM 18924 / JCM 16383 / VKM B-2413 / 1221n) (Desulfurococcus kamchatkensis).